We begin with the raw amino-acid sequence, 715 residues long: Fatty acid oxidation complex subunit alpha (715 aa).

Residues 1–190 (MIYEGKAITV…KVGAVDAVVA (190 aa)) are enoyl-CoA hydratase/isomerase. Position 297 (D297) interacts with substrate. The segment at 312-715 (HDVKQAAVLG…MAKNGQRFFN (404 aa)) is 3-hydroxyacyl-CoA dehydrogenase. Residues M325, D344, 401-403 (VVE), K408, and S430 contribute to the NAD(+) site. Residue H451 is the For 3-hydroxyacyl-CoA dehydrogenase activity of the active site. Residue N454 coordinates NAD(+). N501 and Y660 together coordinate substrate.

The protein in the N-terminal section; belongs to the enoyl-CoA hydratase/isomerase family. This sequence in the C-terminal section; belongs to the 3-hydroxyacyl-CoA dehydrogenase family. As to quaternary structure, heterotetramer of two alpha chains (FadB) and two beta chains (FadA).

The enzyme catalyses a (3S)-3-hydroxyacyl-CoA + NAD(+) = a 3-oxoacyl-CoA + NADH + H(+). It carries out the reaction a (3S)-3-hydroxyacyl-CoA = a (2E)-enoyl-CoA + H2O. The catalysed reaction is a 4-saturated-(3S)-3-hydroxyacyl-CoA = a (3E)-enoyl-CoA + H2O. It catalyses the reaction (3S)-3-hydroxybutanoyl-CoA = (3R)-3-hydroxybutanoyl-CoA. The enzyme catalyses a (3Z)-enoyl-CoA = a 4-saturated (2E)-enoyl-CoA. It carries out the reaction a (3E)-enoyl-CoA = a 4-saturated (2E)-enoyl-CoA. Its pathway is lipid metabolism; fatty acid beta-oxidation. Functionally, involved in the aerobic and anaerobic degradation of long-chain fatty acids via beta-oxidation cycle. Catalyzes the formation of 3-oxoacyl-CoA from enoyl-CoA via L-3-hydroxyacyl-CoA. It can also use D-3-hydroxyacyl-CoA and cis-3-enoyl-CoA as substrate. In Pseudomonas entomophila (strain L48), this protein is Fatty acid oxidation complex subunit alpha.